The chain runs to 356 residues: tRNA N6-adenosine threonylcarbamoyltransferase (356 aa).

The Fe cation site is built by His-115 and His-119. Substrate contacts are provided by residues 138–142 (LVSGG), Asp-171, Gly-184, and Asn-283. Asp-311 contacts Fe cation.

The protein belongs to the KAE1 / TsaD family. The cofactor is Fe(2+).

The protein resides in the cytoplasm. The catalysed reaction is L-threonylcarbamoyladenylate + adenosine(37) in tRNA = N(6)-L-threonylcarbamoyladenosine(37) in tRNA + AMP + H(+). Required for the formation of a threonylcarbamoyl group on adenosine at position 37 (t(6)A37) in tRNAs that read codons beginning with adenine. Is involved in the transfer of the threonylcarbamoyl moiety of threonylcarbamoyl-AMP (TC-AMP) to the N6 group of A37, together with TsaE and TsaB. TsaD likely plays a direct catalytic role in this reaction. In Prochlorococcus marinus (strain MIT 9312), this protein is tRNA N6-adenosine threonylcarbamoyltransferase.